A 457-amino-acid chain; its full sequence is Putative metabolite transport protein YwtG (457 aa).

The next 12 membrane-spanning stretches (helical) occupy residues 7–27 (IWLY…TGVI), 38–58 (LGLN…GAIL), 75–95 (AIMA…LAPN), 97–117 (GVMV…TTIV), 136–156 (LNQL…YIFA), 163–183 (WMLG…LFMP), 240–260 (ALIA…NTII), 276–296 (ASIL…LVAI), 309–329 (LFGN…NLFF), 340–360 (VICL…VVWV), 377–397 (VSTL…PILM), and 400–420 (IGIS…FLFV). The interval 438–457 (DLRDKNGQGGAAGKQQTVGT) is disordered.

The protein belongs to the major facilitator superfamily. Sugar transporter (TC 2.A.1.1) family.

It is found in the cell membrane. The polypeptide is Putative metabolite transport protein YwtG (ywtG) (Bacillus subtilis (strain 168)).